The sequence spans 166 residues: Crossover junction endodeoxyribonuclease RuvC (166 aa).

Residues Asp-11, Glu-70, and Asp-142 contribute to the active site. Asp-11, Glu-70, and Asp-142 together coordinate Mg(2+).

The protein belongs to the RuvC family. Homodimer which binds Holliday junction (HJ) DNA. The HJ becomes 2-fold symmetrical on binding to RuvC with unstacked arms; it has a different conformation from HJ DNA in complex with RuvA. In the full resolvosome a probable DNA-RuvA(4)-RuvB(12)-RuvC(2) complex forms which resolves the HJ. The cofactor is Mg(2+).

The protein localises to the cytoplasm. The catalysed reaction is Endonucleolytic cleavage at a junction such as a reciprocal single-stranded crossover between two homologous DNA duplexes (Holliday junction).. The RuvA-RuvB-RuvC complex processes Holliday junction (HJ) DNA during genetic recombination and DNA repair. Endonuclease that resolves HJ intermediates. Cleaves cruciform DNA by making single-stranded nicks across the HJ at symmetrical positions within the homologous arms, yielding a 5'-phosphate and a 3'-hydroxyl group; requires a central core of homology in the junction. The consensus cleavage sequence is 5'-(A/T)TT(C/G)-3'. Cleavage occurs on the 3'-side of the TT dinucleotide at the point of strand exchange. HJ branch migration catalyzed by RuvA-RuvB allows RuvC to scan DNA until it finds its consensus sequence, where it cleaves and resolves the cruciform DNA. The protein is Crossover junction endodeoxyribonuclease RuvC of Nitratidesulfovibrio vulgaris (strain ATCC 29579 / DSM 644 / CCUG 34227 / NCIMB 8303 / VKM B-1760 / Hildenborough) (Desulfovibrio vulgaris).